Reading from the N-terminus, the 66-residue chain is Large ribosomal subunit protein bL33c (66 aa).

It belongs to the bacterial ribosomal protein bL33 family.

It is found in the plastid. The protein localises to the chloroplast. The polypeptide is Large ribosomal subunit protein bL33c (Cucumis sativus (Cucumber)).